The following is an 821-amino-acid chain: Probable phosphoenolpyruvate synthase (821 aa).

The active-site Tele-phosphohistidine intermediate is the His-444. 7 residues coordinate substrate: Arg-543, Arg-590, Glu-687, Gly-709, Thr-710, Asn-711, and Asp-712. Glu-687 lines the Mg(2+) pocket. Asp-712 contributes to the Mg(2+) binding site. Cys-759 serves as the catalytic Proton donor.

The protein belongs to the PEP-utilizing enzyme family. Mg(2+) is required as a cofactor.

The enzyme catalyses pyruvate + ATP + H2O = phosphoenolpyruvate + AMP + phosphate + 2 H(+). It participates in carbohydrate biosynthesis; gluconeogenesis. In terms of biological role, catalyzes the phosphorylation of pyruvate to phosphoenolpyruvate. This Pyrococcus horikoshii (strain ATCC 700860 / DSM 12428 / JCM 9974 / NBRC 100139 / OT-3) protein is Probable phosphoenolpyruvate synthase (ppsA).